The following is a 419-amino-acid chain: Histidine--tRNA ligase (419 aa).

It belongs to the class-II aminoacyl-tRNA synthetase family. As to quaternary structure, homodimer.

It localises to the cytoplasm. It catalyses the reaction tRNA(His) + L-histidine + ATP = L-histidyl-tRNA(His) + AMP + diphosphate + H(+). The chain is Histidine--tRNA ligase from Halothermothrix orenii (strain H 168 / OCM 544 / DSM 9562).